The primary structure comprises 942 residues: Protein inturned (942 aa).

Basic and acidic residues predominate over residues 1–13 (MADPARRDPRGRA). Disordered stretches follow at residues 1-54 (MADP…LEPE) and 129-150 (PKRH…KHQS). The span at 22–32 (SQEEEEEESDS) shows a compositional bias: acidic residues. The segment covering 33–48 (DAGASSLGSCSSASSD) has biased composition (low complexity). Over residues 138–150 (SNTGPVSILKHQS) the composition is skewed to polar residues. One can recognise a PDZ domain in the interval 189–267 (LVGVIHQTKW…PMQVKLTFEN (79 aa)). Phosphoserine is present on residues S674 and S678. The tract at residues 707-752 (KARKPSPSRIGGGREPGEGEENVGLSPHTTPDTVRKQRESEGSDDN) is disordered.

Belongs to the inturned family. In terms of assembly, component of the CPLANE (ciliogenesis and planar polarity effectors) complex, composed of INTU, FUZ and WDPCP. Interacts with CPLANE1. Interacts with NPHP4 and DAAM1; INTU is mediating the interaction between NPHP4 and DAAM1.

The protein localises to the cytoplasm. It is found in the cell surface. It localises to the cytoskeleton. Its subcellular location is the cilium basal body. The protein resides in the microtubule organizing center. The protein localises to the centrosome. It is found in the centriole. Its function is as follows. Plays a key role in ciliogenesis and embryonic development. Regulator of cilia formation by controlling the organization of the apical actin cytoskeleton and the positioning of the basal bodies at the apical cell surface, which in turn is essential for the normal orientation of elongating ciliary microtubules. Plays a key role in definition of cell polarity via its role in ciliogenesis but not via conversion extension. Has an indirect effect on hedgehog signaling. Proposed to function as core component of the CPLANE (ciliogenesis and planar polarity effectors) complex involved in the recruitment of peripheral IFT-A proteins to basal bodies. Required for recruitment of CPLANE2 to the mother centriole. Binds phosphatidylinositol 3-phosphate with highest affinity, followed by phosphatidylinositol 4-phosphate and phosphatidylinositol 5-phosphate. This Rattus norvegicus (Rat) protein is Protein inturned (Intu).